Here is a 539-residue protein sequence, read N- to C-terminus: Probable glycerol kinase (539 aa).

Thr12 is a substrate binding site. ATP is bound at residue Arg16. Positions 86, 168, and 285 each coordinate substrate. ATP contacts are provided by residues Thr307, Gly352, and 453–457 (GMAKN).

It belongs to the FGGY kinase family.

The enzyme catalyses glycerol + ATP = sn-glycerol 3-phosphate + ADP + H(+). Its pathway is polyol metabolism; glycerol degradation via glycerol kinase pathway; sn-glycerol 3-phosphate from glycerol: step 1/1. The polypeptide is Probable glycerol kinase (gk) (Dictyostelium discoideum (Social amoeba)).